A 593-amino-acid polypeptide reads, in one-letter code: La-related protein 7 (593 aa).

A compositionally biased stretch (polar residues) spans 1–11 (MTAIETDTPSN). The interval 1–28 (MTAIETDTPSNKVKEDESTDLRKDREKK) is disordered. Residues 12-24 (KVKEDESTDLRKD) show a composition bias toward basic and acidic residues. The region spanning 30–121 (RSRVKQLLAD…RRRFPLGEKP (92 aa)) is the HTH La-type RNA-binding domain. Residues 127-205 (RTVYVELLPK…PRKAGMFPKT (79 aa)) form the RRM domain. The disordered stretch occupies residues 191–363 (PPEEAPRKAG…STEEEKDAVD (173 aa)). Basic residues predominate over residues 231 to 240 (KKKKKKKSKA). A compositionally biased stretch (acidic residues) spans 248 to 259 (AEEDTKEQDMDI). 3 stretches are compositionally biased toward basic and acidic residues: residues 295 to 307 (ERAE…EKVR), 314 to 340 (SSSE…DEKP), and 348 to 363 (QECK…DAVD). Residues 461 to 574 (QFVCGVIGKI…TEKLIAKAEK (114 aa)) form the xRRM domain.

Belongs to the LARP7 family. Core component of the 7SK RNP complex. Associates with box C/D small nucleolar ribonucleoprotein (snoRNP) complexes.

The protein resides in the nucleus. Its subcellular location is the nucleoplasm. RNA-binding protein that specifically binds distinct small nuclear RNA (snRNAs) and regulates their processing and function. Specifically binds the 7SK snRNA (7SK RNA) and acts as a core component of the 7SK ribonucleoprotein (RNP) complex, thereby acting as a negative regulator of transcription elongation by RNA polymerase II. The 7SK RNP complex sequesters the positive transcription elongation factor b (P-TEFb) in a large inactive 7SK RNP complex preventing RNA polymerase II phosphorylation and subsequent transcriptional elongation. The 7SK RNP complex also promotes snRNA gene transcription by RNA polymerase II via interaction with the little elongation complex (LEC). LARP7 specifically binds to the highly conserved 3'-terminal U-rich stretch of 7SK RNA; on stimulation, remains associated with 7SK RNA, whereas P-TEFb is released from the complex. LARP7 also acts as a regulator of mRNA splicing fidelity by promoting U6 snRNA processing. Specifically binds U6 snRNAs and associates with a subset of box C/D RNP complexes: promotes U6 snRNA 2'-O-methylation by facilitating U6 snRNA loading into box C/D RNP complexes. U6 snRNA 2'-O-methylation is required for mRNA splicing fidelity. The sequence is that of La-related protein 7 from Xenopus tropicalis (Western clawed frog).